Consider the following 893-residue polypeptide: Alanine--tRNA ligase (893 aa).

This sequence belongs to the class-II aminoacyl-tRNA synthetase family.

Its subcellular location is the cytoplasm. The catalysed reaction is tRNA(Ala) + L-alanine + ATP = L-alanyl-tRNA(Ala) + AMP + diphosphate. In terms of biological role, catalyzes the attachment of alanine to tRNA(Ala) in a two-step reaction: alanine is first activated by ATP to form Ala-AMP and then transferred to the acceptor end of tRNA(Ala). Also edits incorrectly charged Ser-tRNA(Ala) and Gly-tRNA(Ala) via its editing domain. In Leuconostoc mesenteroides subsp. mesenteroides (strain ATCC 8293 / DSM 20343 / BCRC 11652 / CCM 1803 / JCM 6124 / NCDO 523 / NBRC 100496 / NCIMB 8023 / NCTC 12954 / NRRL B-1118 / 37Y), this protein is Alanine--tRNA ligase (alaS).